A 357-amino-acid polypeptide reads, in one-letter code: Histidinol-phosphate aminotransferase 1 (357 aa).

Lys217 bears the N6-(pyridoxal phosphate)lysine mark.

Belongs to the class-II pyridoxal-phosphate-dependent aminotransferase family. Histidinol-phosphate aminotransferase subfamily. As to quaternary structure, homodimer. It depends on pyridoxal 5'-phosphate as a cofactor.

It catalyses the reaction L-histidinol phosphate + 2-oxoglutarate = 3-(imidazol-4-yl)-2-oxopropyl phosphate + L-glutamate. Its pathway is amino-acid biosynthesis; L-histidine biosynthesis; L-histidine from 5-phospho-alpha-D-ribose 1-diphosphate: step 7/9. The protein is Histidinol-phosphate aminotransferase 1 of Burkholderia lata (strain ATCC 17760 / DSM 23089 / LMG 22485 / NCIMB 9086 / R18194 / 383).